Consider the following 219-residue polypeptide: Probable lipoprotein YiaD (219 aa).

The N-terminal stretch at 1 to 20 (MKKRVYLIAAVVSGALAVSG) is a signal peptide. C21 is lipidated: N-palmitoyl cysteine. Residue C21 is the site of S-diacylglycerol cysteine attachment. The next 2 helical transmembrane spans lie at 37 to 55 (IGAGLGSLVGAGIGALSSS) and 62 to 84 (GALIGAAAGAALGGGVGYYMDVQ). The OmpA-like domain maps to 103-219 (GDNIILNMPN…RRVEITLSPL (117 aa)).

The protein resides in the cell inner membrane. It localises to the cell outer membrane. Its function is as follows. Suppresses temperature-sensitive mutations in BamB when overexpressed. This is Probable lipoprotein YiaD (yiaD) from Escherichia coli (strain K12).